Reading from the N-terminus, the 329-residue chain is N-acetylmuramoyl-L-alanine amidase sle1 (329 aa).

Positions 1-26 (MNKKILATAVLGTGALSTLFAHQAEA) are cleaved as a signal peptide. LysM domains are found at residues 28-71 (TTHT…VLKV), 88-131 (STYT…QLKV), and 152-195 (STYT…KLRV). One can recognise a Peptidase C51 domain in the interval 205-329 (STRSAQSTYY…YQVRNYKFIH (125 aa)).

The protein resides in the secreted. It is found in the cell surface. It catalyses the reaction Hydrolyzes the link between N-acetylmuramoyl residues and L-amino acid residues in certain cell-wall glycopeptides.. Functionally, peptidoglycan hydrolase involved in the splitting of the septum during cell division. This Staphylococcus haemolyticus (strain JCSC1435) protein is N-acetylmuramoyl-L-alanine amidase sle1 (sle1).